Here is a 528-residue protein sequence, read N- to C-terminus: Golgi resident protein GCP60 (528 aa).

Residues 1–71 (MAAVLNAERL…EAAAGGAAEE (71 aa)) are disordered. Ala-2 is modified (N-acetylalanine; in Golgi resident protein GCP60, N-terminally processed). Ser-13 is subject to Phosphoserine. Residue Thr-18 is modified to Phosphothreonine. Ser-20, Ser-43, and Ser-47 each carry phosphoserine. A compositionally biased stretch (pro residues) spans 34–45 (LLPPPLPPPSPP). Residues 54–69 (SGEQPEPGEAAAGGAA) are compositionally biased toward low complexity. Residues 83–174 (LEELYGLALR…LNRCCHLFST (92 aa)) enclose the ACB domain. Residues 174-257 (TYVASHKIEK…AALNSQTAVQ (84 aa)) adopt a coiled-coil conformation. The interval 182–230 (EKEEQEKKRKEEEERRRREEEERERLQKEEEKRRREEEERLRREEEERR) is disordered. The interval 182–240 (EKEEQEKKRKEEEERRRREEEERERLQKEEEKRRREEEERLRREEEERRRIEEERLRLE) is charged amino-acid region (CAR). The interval 241-308 (QQKQQIMAAL…QQQAALQKQQ (68 aa)) is q domain; Interaction with PI4KB, TBC1D22A and TBC1D22B. A disordered region spans residues 335–362 (NGQAKTHTDSSEKELEPEAAEEALENGP). The span at 340–350 (THTDSSEKELE) shows a compositional bias: basic and acidic residues. The region spanning 384–526 (KEKIQQDADS…SKSVYYRVYY (143 aa)) is the GOLD domain. The segment at 514–516 (LWR) is membrane-binding.

As to quaternary structure, homodimer. Interacts with the C-terminal cytoplasmic domain of giantin/GOLGB1. Interacts with PBR and PKA regulatory subunit RI-alpha. Does not interact with PKA regulatory subunit RI-beta nor PKA regulatory subunit RII-alpha. Interacts (via Q domain) with PI4KB (via N-terminus). Interacts (via Q domain) with TBC1D22A and TBC1D22B; interactions with PI4KB and with TBC1D22A and TBC1D22B are mutually exclusive. Interacts with C10ORF76 and RAB11B. (Microbial infection) Interacts (via GOLD domain) with 3A proteins from various picornaviruses, including poliovirus, enterovirus A71, enterovirus D68, hepatitis A virus, human parechovirus 1, poliovirus, Human rhinovirus-14 (Hrv-14), coysackievirus B2, coysackievirus B3, coysackievirus B5, Aichi virus and human klassevirus. Interacts (via GOLD domain) with Aichi virus protein 3A; this interaction allows the formation of a 3A/ACBD3/PI4KB complex in order to synthesize PI4P at the viral RNA replication sites. Interacts with Aichi virus protein 2B. Interacts with Aichi virus protein 2C. In terms of tissue distribution, ubiquitous, with highest expression in testis and ovary.

Its subcellular location is the golgi apparatus membrane. The protein localises to the mitochondrion. Functionally, involved in the maintenance of Golgi structure by interacting with giantin, affecting protein transport between the endoplasmic reticulum and Golgi. Involved in hormone-induced steroid biosynthesis in testicular Leydig cells. Recruits PI4KB to the Golgi apparatus membrane; enhances the enzyme activity of PI4KB activity via its membrane recruitment thereby increasing the local concentration of the substrate in the vicinity of the kinase. (Microbial infection) Plays an essential role in Aichi virus RNA replication by recruiting PI4KB at the viral replication sites. This Homo sapiens (Human) protein is Golgi resident protein GCP60 (ACBD3).